Here is a 347-residue protein sequence, read N- to C-terminus: Haptoglobin (347 aa).

An N-terminal signal peptide occupies residues 1–18 (MRALGAVVTLLLWGQLFA). The 58-residue stretch at 31–88 (DSCPKPPEIANGYVEHLVRYRCRQFYRLRAEGDGVYTLNDEKQWVNTVAGEKLPECEA) folds into the Sushi domain. 4 disulfide bridges follow: cysteine 52–cysteine 86, cysteine 90–cysteine 207, cysteine 250–cysteine 281, and cysteine 292–cysteine 322. The Peptidase S1 domain maps to 103 to 345 (IIGGSMDAKG…LKDWVQETMA (243 aa)). Residues asparagine 148, asparagine 182, asparagine 256, and asparagine 264 are each glycosylated (N-linked (GlcNAc...) asparagine). An interaction with CD163 region spans residues 259–264 (VPEKKN).

The protein belongs to the peptidase S1 family. Tetramer of two alpha and two beta chains; disulfide-linked. The hemoglobin/haptoglobin complex is composed of a haptoglobin dimer bound to two hemoglobin alpha-beta dimers. Interacts with CD163. Interacts with ERGIC3. In terms of tissue distribution, expressed by the liver and secreted in plasma.

It localises to the secreted. As a result of hemolysis, hemoglobin is found to accumulate in the kidney and is secreted in the urine. Haptoglobin captures, and combines with free plasma hemoglobin to allow hepatic recycling of heme iron and to prevent kidney damage. Haptoglobin also acts as an antioxidant, has antibacterial activity and plays a role in modulating many aspects of the acute phase response. Hemoglobin/haptoglobin complexes are rapidly cleared by the macrophage CD163 scavenger receptor expressed on the surface of liver Kupfer cells through an endocytic lysosomal degradation pathway. This Mus musculus (Mouse) protein is Haptoglobin (Hp).